Reading from the N-terminus, the 256-residue chain is MDPTYSSESIYNLIPSDWKEPPQPPRYISIFKATVKDDMQKFKTAMKTMGPAKLEVPSPKDFLKKHSKEKTLPPKKKFDRHEPKKPPVPLRTEHPVMGIQSEKNFINTNAANVIMGVAKKPKPVYVDKRTGDKHDLETSGLVPKYINKKDYGVTPEYICKRNEEVKKAQEEYDNYIQENLRKAAMKRLSDEEREAVLQGLKKNWEEVHKEFQSLSVFIDSIPKKMRKQKLEEEMKQLEHDIAVLEKHKIIYIANKK.

The tract at residues 48-92 (TMGPAKLEVPSPKDFLKKHSKEKTLPPKKKFDRHEPKKPPVPLRT) is disordered. Positions 61-72 (DFLKKHSKEKTL) are enriched in basic and acidic residues. Positions 83–89 (PKKPPVP) match the SH3-binding motif. One can recognise an Enkurin domain in the interval 160-252 (KRNEEVKKAQ…VLEKHKIIYI (93 aa)). Residues 176–187 (IQENLRKAAMKR) form the IQ domain.

As to quaternary structure, microtubule inner protein component of sperm flagellar doublet microtubules. Binds calmodulin via its IQ domain. Interacts with TRPC1, TRPC2, TRPC5, but not TRPC3. Interacts with CFAP45.

It localises to the cytoplasm. Its subcellular location is the cytoskeleton. The protein resides in the cilium axoneme. It is found in the flagellum axoneme. Functionally, adapter that functions to localize a calcium-sensitive signal transduction machinery in sperm to a calcium-permeable ion channel. Microtubule inner protein (MIP) part of the dynein-decorated doublet microtubules (DMTs) in cilia axoneme, which is required for motile cilia beating. The polypeptide is Enkurin (ENKUR) (Sus scrofa (Pig)).